The primary structure comprises 91 residues: Small ribosomal subunit protein uS19 (91 aa).

Belongs to the universal ribosomal protein uS19 family.

In terms of biological role, protein S19 forms a complex with S13 that binds strongly to the 16S ribosomal RNA. In Alcanivorax borkumensis (strain ATCC 700651 / DSM 11573 / NCIMB 13689 / SK2), this protein is Small ribosomal subunit protein uS19.